The sequence spans 183 residues: UPF0200 protein MmarC7_0527 (183 aa).

Residue 8-15 (GMPGSGKS) coordinates ATP.

Belongs to the UPF0200 family.

This chain is UPF0200 protein MmarC7_0527, found in Methanococcus maripaludis (strain C7 / ATCC BAA-1331).